Consider the following 48-residue polypeptide: MRKKIIFVCQDCLSRNYVMSWSKQVLNRLIINKYCKHCNQKTKHLDSF.

This sequence belongs to the bacterial ribosomal protein bL33 family.

The protein is Large ribosomal subunit protein bL33B (rpmG2) of Mycoplasma pneumoniae (strain ATCC 29342 / M129 / Subtype 1) (Mycoplasmoides pneumoniae).